The primary structure comprises 350 residues: UDP-N-acetylenolpyruvoylglucosamine reductase (350 aa).

Positions 25 to 194 constitute an FAD-binding PCMH-type domain; the sequence is VGPVARRLIT…LDVGGRSAPL (170 aa). Residue Arg-166 is part of the active site. Ser-243 serves as the catalytic Proton donor. Glu-342 is a catalytic residue.

Belongs to the MurB family. FAD is required as a cofactor.

It localises to the cytoplasm. The enzyme catalyses UDP-N-acetyl-alpha-D-muramate + NADP(+) = UDP-N-acetyl-3-O-(1-carboxyvinyl)-alpha-D-glucosamine + NADPH + H(+). The protein operates within cell wall biogenesis; peptidoglycan biosynthesis. In terms of biological role, cell wall formation. This is UDP-N-acetylenolpyruvoylglucosamine reductase from Mycobacterium sp. (strain MCS).